The chain runs to 338 residues: Mitochondrial glutathione transporter SLC25A40 (338 aa).

Solcar repeat units lie at residues 13–131 (VTPL…LSAL), 139–223 (NETC…LKKW), and 233–327 (PTFM…GKAF). Helical transmembrane passes span 19-39 (MLAS…LDVV), 103-123 (LWSG…IYFT), 142-162 (CIPI…ISPL), 199-220 (WAPT…YEIL), 239-259 (FTSG…FDVV), and 298-318 (GLFS…AIMI).

Belongs to the mitochondrial carrier (TC 2.A.29) family.

It localises to the mitochondrion inner membrane. The enzyme catalyses glutathione(in) = glutathione(out). Functionally, probable mitochondrial transporter required for glutathione import into mitochondria. Glutathione, which plays key roles in oxidative metabolism, is produced exclusively in the cytosol and is imported in many organelles. Mitochondrial glutathione is required for the activity and stability of proteins containing iron-sulfur clusters, as well as erythropoiesis. This is Mitochondrial glutathione transporter SLC25A40 from Homo sapiens (Human).